The chain runs to 349 residues: Phenylalanine--tRNA ligase alpha subunit (349 aa).

Residue E258 coordinates Mg(2+).

It belongs to the class-II aminoacyl-tRNA synthetase family. Phe-tRNA synthetase alpha subunit type 1 subfamily. In terms of assembly, tetramer of two alpha and two beta subunits. Requires Mg(2+) as cofactor.

It is found in the cytoplasm. It carries out the reaction tRNA(Phe) + L-phenylalanine + ATP = L-phenylalanyl-tRNA(Phe) + AMP + diphosphate + H(+). This Rickettsia rickettsii (strain Sheila Smith) protein is Phenylalanine--tRNA ligase alpha subunit.